We begin with the raw amino-acid sequence, 289 residues long: Zinc finger matrin-type protein 3 (289 aa).

Positions 1–59 (MILLQHAGLPPPKRPSSSPPMSVAARSTGALQLPPQKPFGQEASLPLAGEEEPPKGGEQ) are disordered. Over residues 9–18 (LPPPKRPSSS) the composition is skewed to pro residues. 2 Matrin-type zinc fingers span residues 70–100 (LYCKLCNVTLNSAQQAQAHYQGKNHGKKLRN) and 147–177 (DYCKLCDASFSSPAVAQAHYQGKNHAKRLRL). Positions 180–191 (AQSNSFSDSSEV) are enriched in polar residues. The segment at 180–200 (AQSNSFSDSSEVGQRRTRKEG) is disordered. The Matrin-type 3 zinc finger occupies 246–276 (FYCSMCNVGAGEEVEFRQHLESKQHKSKVSE).

As to quaternary structure, interacts with dsRNA.

It localises to the nucleus. Its subcellular location is the nucleolus. Its function is as follows. Acts as a bona fide target gene of p53/TP53. May play a role in the TP53-dependent growth regulatory pathway. May contribute to TP53-mediated apoptosis by regulation of TP53 expression and translocation to the nucleus and nucleolus. The chain is Zinc finger matrin-type protein 3 from Bos taurus (Bovine).